The following is a 357-amino-acid chain: P2Y purinoceptor 8 (357 aa).

The Extracellular segment spans residues 1-26 (MVKNGSHLDAETLAMLQNKAISITLP). The N-linked (GlcNAc...) asparagine glycan is linked to Asn4. Residues 27–47 (VVYTMVAIISIPGNFFSLWVL) traverse the membrane as a helical segment. Residues 48-56 (CWHIKPKTP) are Cytoplasmic-facing. Residues 57–77 (SVIFMINLSITDLLLACCFPF) traverse the membrane as a helical segment. Topologically, residues 78–97 (QIFYHIQRNHWIFGKTLCSL) are extracellular. Cys95 and Cys174 are oxidised to a cystine. The helical transmembrane segment at 98–118 (VTVMFYSNMYSSILTMTCISI) threads the bilayer. The Cytoplasmic portion of the chain corresponds to 119-137 (ERYMGVVYPMKLIKWRRKR). A helical membrane pass occupies residues 138 to 158 (YALGACVIMWIFLLLAFYPLE). Residues 159 to 185 (STDLTYEVKELGIITCFDVLKWEMLPN) lie on the Extracellular side of the membrane. The chain crosses the membrane as a helical span at residues 186-206 (FAAWVAFLLTLFVVLFLIPFI). The Cytoplasmic segment spans residues 207-236 (VTVGCYIGTIRKLIQTSSRYGNKQKTRSIY). Residues 237-257 (LAIIVLSVFITCFAPNNFILL) traverse the membrane as a helical segment. At 258–271 (AHMIVRLFYEGSLY) the chain is on the extracellular side. Residues 272 to 294 (PAYKLTLCLSCLNNCIDPFIYYF) traverse the membrane as a helical segment. Residues 295 to 357 (ASKEFYQKFM…ICLQRQESVF (63 aa)) lie on the Cytoplasmic side of the membrane.

The protein belongs to the G-protein coupled receptor 1 family.

The protein localises to the cell membrane. Functionally, probable receptor for purines coupled to G-proteins. In Gallus gallus (Chicken), this protein is P2Y purinoceptor 8 (P2RY8).